A 146-amino-acid chain; its full sequence is Heat-stable 19 kDa antigen (146 aa).

An N-terminal signal peptide occupies residues 1–20; the sequence is MKFSLLSAIAAAVFVPFTSA.

This sequence belongs to the cerato-platanin family. In terms of processing, glycosylated.

The protein localises to the secreted. This chain is Heat-stable 19 kDa antigen (CSA), found in Coccidioides posadasii (strain C735) (Valley fever fungus).